Consider the following 365-residue polypeptide: Protein YIM1 (365 aa).

Belongs to the YIM1 family.

It localises to the lipid droplet. The protein resides in the mitochondrion. In Saccharomyces cerevisiae (strain ATCC 204508 / S288c) (Baker's yeast), this protein is Protein YIM1 (YIM1).